The chain runs to 249 residues: Probable phosphoglycerate mutase (249 aa).

Substrate contacts are provided by residues 9–16 (RHGESTWN), 22–23 (TG), R61, 88–91 (ERMY), K99, 115–116 (RR), and 184–185 (GN). Catalysis depends on H10, which acts as the Tele-phosphohistidine intermediate. The Proton donor/acceptor role is filled by E88.

Belongs to the phosphoglycerate mutase family. BPG-dependent PGAM subfamily. Homodimer.

It catalyses the reaction (2R)-2-phosphoglycerate = (2R)-3-phosphoglycerate. The enzyme catalyses (2R)-3-phospho-glyceroyl phosphate = (2R)-2,3-bisphosphoglycerate + H(+). Catalyzes the interconversion of 2-phosphoglycerate and 3-phosphoglycerate. The protein is Probable phosphoglycerate mutase (gpmA) of Dictyostelium discoideum (Social amoeba).